The primary structure comprises 416 residues: Prostate tumor-overexpressed gene 1 protein (416 aa).

Residues Met-1–Ser-53 form a disordered region. Over residues Gly-12–Gly-21 the composition is skewed to gly residues. Residues Leu-27–Ser-36 show a composition bias toward low complexity. Ser-53 carries the post-translational modification Phosphoserine. Residues Asn-184 to Gly-416 are interaction with FLOT1.

The protein belongs to the Mediator complex subunit 25 family. PTOV1 subfamily. In terms of assembly, may interact with CREBBP. Interacts with FLOT1. Ubiquitinated by the CRL2(KLHDC2) complex, which recognizes the diglycine (Gly-Gly) at the C-terminus, leading to its degradation. Ubiquitinated by the CRL2(APPBP2) complex, which recognizes the Arg-Xaa-Xaa-Gly sequence at the C-terminus, leading to its degradation. Expressed in brain, heart, kidney, liver, placenta, skeletal muscle and small intestine.

It is found in the cytoplasm. Its subcellular location is the nucleus. The protein resides in the cell membrane. It localises to the perinuclear region. In terms of biological role, may activate transcription. Required for nuclear translocation of FLOT1. Promotes cell proliferation. This chain is Prostate tumor-overexpressed gene 1 protein (PTOV1), found in Homo sapiens (Human).